A 337-amino-acid polypeptide reads, in one-letter code: Tryptophan--tRNA ligase (337 aa).

Residues 12–14 (QPS) and 21–22 (GN) each bind ATP. The 'HIGH' region signature appears at 13 to 22 (PSADSLHLGN). Aspartate 138 contributes to the L-tryptophan binding site. ATP-binding positions include 150-152 (GDD), isoleucine 189, and 198-202 (KMSKS). Residues 198 to 202 (KMSKS) carry the 'KMSKS' region motif.

The protein belongs to the class-I aminoacyl-tRNA synthetase family. Homodimer.

The protein localises to the cytoplasm. It catalyses the reaction tRNA(Trp) + L-tryptophan + ATP = L-tryptophyl-tRNA(Trp) + AMP + diphosphate + H(+). Functionally, catalyzes the attachment of tryptophan to tRNA(Trp). This is Tryptophan--tRNA ligase from Leifsonia xyli subsp. xyli (strain CTCB07).